The following is a 262-amino-acid chain: Catechol O-methyltransferase domain-containing protein 1 (262 aa).

The helical; Signal-anchor for type II membrane protein transmembrane segment at 12–32 (AALALGSAALGAAFATGLLLG) threads the bilayer. Residues Asp-108, 110-111 (GT), Ser-116, Glu-134, Val-135, Ala-163, Asp-185, Asp-187, and Tyr-194 each bind S-adenosyl-L-methionine.

Belongs to the class I-like SAM-binding methyltransferase superfamily. Cation-dependent O-methyltransferase family. Homodimer.

The protein resides in the membrane. In terms of biological role, putative O-methyltransferase. The chain is Catechol O-methyltransferase domain-containing protein 1 (Comtd1) from Mus musculus (Mouse).